The chain runs to 360 residues: Peptide chain release factor 1 (360 aa).

N5-methylglutamine is present on Gln235. Positions 291–308 are enriched in basic and acidic residues; it reads ASERRNLLGTGDRSDRNR. A disordered region spans residues 291–312; it reads ASERRNLLGTGDRSDRNRTYNF.

This sequence belongs to the prokaryotic/mitochondrial release factor family. In terms of processing, methylated by PrmC. Methylation increases the termination efficiency of RF1.

Its subcellular location is the cytoplasm. Its function is as follows. Peptide chain release factor 1 directs the termination of translation in response to the peptide chain termination codons UAG and UAA. The protein is Peptide chain release factor 1 of Yersinia pseudotuberculosis serotype I (strain IP32953).